The chain runs to 202 residues: Kunitz trypsin inhibitor 7 (202 aa).

The first 25 residues, 1–25 (MKTFRSMLISLLLVAITTTSGVVEG), serve as a signal peptide directing secretion. The cysteines at positions 69 and 115 are disulfide-linked. N-linked (GlcNAc...) asparagine glycosylation is found at N93, N136, N144, and N198.

It belongs to the protease inhibitor I3 (leguminous Kunitz-type inhibitor) family.

In terms of biological role, exhibits Kunitz trypsin protease inhibitor activity. This chain is Kunitz trypsin inhibitor 7, found in Arabidopsis thaliana (Mouse-ear cress).